A 951-amino-acid chain; its full sequence is Metal transporter CNNM1 (951 aa).

A helical membrane pass occupies residues 23–43 (AVLLLFFSLSPRPPAAAAWLL). The segment at 114 to 138 (GAGGAAPSAVPTRPPGPQRCREQSD) is disordered. Residues 218–414 (LLPPAWLRAL…DPYSDLVKEE (197 aa)) form the CNNM transmembrane domain. Transmembrane regions (helical) follow at residues 222 to 242 (AWLR…FSGL), 282 to 302 (LLCT…GWLY), and 319 to 339 (AGVH…FLGA). 2 CBS domains span residues 433–495 (LTPL…CTPL) and 502–568 (YNRP…ILDE). Polar residues-rich tracts occupy residues 731 to 740 (SRCSGLNRSE) and 814 to 824 (KAPTTRGTPQT). 2 disordered regions span residues 731 to 754 (SRCS…GSNT) and 795 to 830 (MDSS…DDPV). 2 positions are modified to phosphothreonine: T821 and T824. S850 bears the Phosphoserine mark. Residues 903-951 (DPEASPCSSDSEENMGKKLLRTLSGRKRKKSADGERASEENSNLTPLIT) form a disordered region. A compositionally biased stretch (basic residues) spans 920-932 (KLLRTLSGRKRKK). Residues 942 to 951 (ENSNLTPLIT) show a composition bias toward polar residues.

The protein belongs to the ACDP family. Predominantly expressed in brain and testis, and, at lower levels, in kidney. In the brain, expressed in hippocampal neurons (at protein level).

It is found in the cell membrane. Functionally, probable metal transporter. The polypeptide is Metal transporter CNNM1 (Cnnm1) (Mus musculus (Mouse)).